A 610-amino-acid chain; its full sequence is Elongation factor 4 (610 aa).

The tr-type G domain maps to 7-189 (SRIRNFSIIA…AIVQRIPPPK (183 aa)). GTP is bound by residues 19 to 24 (DHGKST) and 136 to 139 (NKID).

It belongs to the TRAFAC class translation factor GTPase superfamily. Classic translation factor GTPase family. LepA subfamily.

It localises to the cell inner membrane. It catalyses the reaction GTP + H2O = GDP + phosphate + H(+). Its function is as follows. Required for accurate and efficient protein synthesis under certain stress conditions. May act as a fidelity factor of the translation reaction, by catalyzing a one-codon backward translocation of tRNAs on improperly translocated ribosomes. Back-translocation proceeds from a post-translocation (POST) complex to a pre-translocation (PRE) complex, thus giving elongation factor G a second chance to translocate the tRNAs correctly. Binds to ribosomes in a GTP-dependent manner. In Thermus thermophilus (strain ATCC BAA-163 / DSM 7039 / HB27), this protein is Elongation factor 4.